The chain runs to 428 residues: Methyl-branched lipid omega-hydroxylase (428 aa).

Cys379 lines the heme pocket.

This sequence belongs to the cytochrome P450 family. It depends on heme as a cofactor.

It catalyses the reaction a methyl-branched lipid + O2 + 2 reduced ferredoxin [iron-sulfur] cluster + 2 H(+) = an omega-hydroxy-methyl-branched lipid + H2O + 2 oxidized ferredoxin [iron-sulfur] cluster.. The enzyme catalyses cholest-4-en-3-one + 6 reduced [2Fe-2S]-[ferredoxin] + 3 O2 + 5 H(+) = (25R)-3-oxocholest-4-en-26-oate + 6 oxidized [2Fe-2S]-[ferredoxin] + 4 H2O. It functions in the pathway lipid metabolism; branched-chain fatty acid metabolism. Primarily hydroxylates the omega-carbon of a number of methyl-branched lipids, including (2E,6E)-farnesol, phytanate, geranylgeraniol, 15-methylpalmitate and (2E,6E)-farnesyl diphosphate. Also catalyzes the sequential oxidation of the terminal methyl of cholest-4-en-3-one into (25R)-26-hydroxycholest-4-en-3-one (alcohol), (25R)-26-oxocholest-4-en-3-one (aldehyde), to finally yield the carboxylic acid (25R)-3-oxocholest-4-en-26-oate. Also able to sequentially oxidize cholesterol itself, not only cholest-4-en-3-one. The protein is Methyl-branched lipid omega-hydroxylase (cyp124) of Mycobacterium bovis (strain ATCC BAA-935 / AF2122/97).